A 599-amino-acid polypeptide reads, in one-letter code: Protein linkin (599 aa).

A signal peptide spans 1–19; it reads MKKILPIIWLINLVSGSLS. Residues 20 to 553 lie on the Extracellular side of the membrane; that stretch reads LEKKAPDLLG…SRLYVTPSAL (534 aa). Asn50, Asn117, Asn163, Asn361, and Asn378 each carry an N-linked (GlcNAc...) asparagine glycan. A helical transmembrane segment spans residues 554 to 574; that stretch reads IVQSLAVIALVCCMLLMVVVF. The Cytoplasmic portion of the chain corresponds to 575–599; that stretch reads LHYREKKEDRYERQQQSHRFHFDAM.

The protein belongs to the TIP family. In terms of tissue distribution, expressed in all somatic gonadal cells including distal tip cells, anchor cell, uterine precursor cells and spermatheca precursor cells of the hermaphrodite. Also expressed in the pharynx, pharyngeal-intestinal valve, intestine, excretory cell and canal, seam cells, a subset of hypodermal cells, vulval precursor cells of the hermaphrodite and hook precursor cells in the male.

The protein localises to the apical cell membrane. The protein resides in the lateral cell membrane. Its function is as follows. Probable cell adhesion protein involved in gonadal cell migration. This is Protein linkin from Caenorhabditis elegans.